The chain runs to 785 residues: Peptide transporter family 2 (785 aa).

The next 9 membrane-spanning stretches (helical) occupy residues 46–66, 72–92, 99–119, 134–154, 167–187, 208–228, 303–323, 345–365, and 382–402; these read FSFY…LNFS, VLFH…SILA, FWTI…LAFS, LLGL…VSAF, ISLF…ISMW, FGIP…GSFW, VIVM…QGST, MGVL…SIVY, and AGGG…QLFV. N-linked (GlcNAc...) asparagine glycosylation occurs at Asn-467. 3 helical membrane-spanning segments follow: residues 670–690, 711–731, and 738–758; these read ILWQ…FSIT, WLFT…LNIF, and MFVF…LAVF.

It belongs to the major facilitator superfamily. Proton-dependent oligopeptide transporter (POT/PTR) (TC 2.A.17) family. Expressed in vulval, pharyngeal and anal muscles.

The protein resides in the membrane. Functionally, proton-dependent uptake of di- or tripeptides, and to a minor extent tetrapeptides. Transport is independent of sodium and chloride ions. Protein shows high affinity to peptide substrates. The protein is Peptide transporter family 2 (pept-2) of Caenorhabditis elegans.